A 470-amino-acid polypeptide reads, in one-letter code: Glucose-1-phosphate adenylyltransferase (470 aa).

Alpha-D-glucose 1-phosphate-binding positions include G165, 182–183, and S200; that span reads EK.

Belongs to the bacterial/plant glucose-1-phosphate adenylyltransferase family. In terms of assembly, homotetramer.

The enzyme catalyses alpha-D-glucose 1-phosphate + ATP + H(+) = ADP-alpha-D-glucose + diphosphate. Its pathway is glycan biosynthesis; glycogen biosynthesis. In terms of biological role, involved in the biosynthesis of ADP-glucose, a building block required for the elongation reactions to produce glycogen. Catalyzes the reaction between ATP and alpha-D-glucose 1-phosphate (G1P) to produce pyrophosphate and ADP-Glc. This Paenarthrobacter aurescens (strain TC1) protein is Glucose-1-phosphate adenylyltransferase.